The following is a 199-amino-acid chain: Interleukin-11 (199 aa).

Positions Met1–Ala21 are cleaved as a signal peptide. The tract at residues His182 to Arg190 is important for interaction with IL11RA and for the stimulation of cell proliferation.

It belongs to the IL-6 superfamily. As to quaternary structure, interacts with either IL11RA1 or IL11RA2 to associate with IL6ST, giving rise to a multimeric signaling complex.

The protein localises to the secreted. Cytokine that stimulates the proliferation of hematopoietic stem cells and megakaryocyte progenitor cells and induces megakaryocyte maturation resulting in increased platelet production. Also promotes the proliferation of hepatocytes in response to liver damage. Binding to its receptor formed by IL6ST and either IL11RA1 or IL11RA2 activates a signaling cascade that promotes cell proliferation, also in the context of various cancers. Signaling leads to the activation of intracellular protein kinases and the phosphorylation of STAT3. The interaction with the membrane-bound IL11RA and IL6ST stimulates 'classic signaling', whereas the binding of IL11 and soluble IL11RA to IL6ST stimulates 'trans-signaling'. The protein is Interleukin-11 of Mus musculus (Mouse).